Reading from the N-terminus, the 79-residue chain is Sulfur carrier protein TusA (79 aa).

C17 serves as the catalytic Cysteine persulfide intermediate.

Belongs to the sulfur carrier protein TusA family.

The protein resides in the cytoplasm. Sulfur carrier protein which probably makes part of a sulfur-relay system. The polypeptide is Sulfur carrier protein TusA (Haemophilus influenzae (strain ATCC 51907 / DSM 11121 / KW20 / Rd)).